The primary structure comprises 183 residues: Ribosome rescue factor SmrB (183 aa).

Residues 98-173 form the Smr domain; that stretch reads LDLHGLTQLQ…GDAALLVLIE (76 aa).

This sequence belongs to the SmrB family. In terms of assembly, associates with collided ribosomes, but not with correctly translating polysomes.

Functionally, acts as a ribosome collision sensor. Detects stalled/collided disomes (pairs of ribosomes where the leading ribosome is stalled and a second ribosome has collided with it) and endonucleolytically cleaves mRNA at the 5' boundary of the stalled ribosome. Stalled/collided disomes form a new interface (primarily via the 30S subunits) that binds SmrB. Cleaved mRNA becomes available for tmRNA ligation, leading to ribosomal subunit dissociation and rescue of stalled ribosomes. In Escherichia coli O157:H7, this protein is Ribosome rescue factor SmrB.